A 349-amino-acid polypeptide reads, in one-letter code: Cobalt-precorrin-5B C(1)-methyltransferase (349 aa).

The protein belongs to the CbiD family.

The enzyme catalyses Co-precorrin-5B + S-adenosyl-L-methionine = Co-precorrin-6A + S-adenosyl-L-homocysteine. Its pathway is cofactor biosynthesis; adenosylcobalamin biosynthesis; cob(II)yrinate a,c-diamide from sirohydrochlorin (anaerobic route): step 6/10. Functionally, catalyzes the methylation of C-1 in cobalt-precorrin-5B to form cobalt-precorrin-6A. This chain is Cobalt-precorrin-5B C(1)-methyltransferase, found in Saccharolobus islandicus (strain Y.N.15.51 / Yellowstone #2) (Sulfolobus islandicus).